Here is a 215-residue protein sequence, read N- to C-terminus: uncharacterized protein (215 aa).

Residues 1-17 (MKKVLASATILSLMLVG) form the signal peptide. The interval 17–110 (GCSNGGNDES…NKQQQSVQDN (94 aa)) is disordered. A lipid anchor (N-palmitoyl cysteine) is attached at cysteine 18. A lipid anchor (S-diacylglycerol cysteine) is attached at cysteine 18. Residues 25 to 62 (ESSHKDDSSKTEQKDKSSSQHDSKKDSKRNDTNNKQDN) are compositionally biased toward basic and acidic residues. Low complexity-rich tracts occupy residues 63-76 (QENN…NNQN) and 91-110 (NSNG…VQDN).

The protein resides in the cell membrane. This is an uncharacterized protein from Staphylococcus epidermidis (strain ATCC 35984 / DSM 28319 / BCRC 17069 / CCUG 31568 / BM 3577 / RP62A).